A 183-amino-acid chain; its full sequence is Inner membrane-spanning protein YciB (183 aa).

5 consecutive transmembrane segments (helical) span residues 22–44, 53–73, 76–96, 121–141, and 153–173; these read VQAA…RILF, IVGL…DLAF, WKVT…QYVF, LGWA…SQLF, and GFTG…YPYI.

It belongs to the YciB family.

It is found in the cell inner membrane. Plays a role in cell envelope biogenesis, maintenance of cell envelope integrity and membrane homeostasis. The sequence is that of Inner membrane-spanning protein YciB from Haemophilus ducreyi (strain 35000HP / ATCC 700724).